A 547-amino-acid polypeptide reads, in one-letter code: Probable hydroxyacid-oxoacid transhydrogenase, mitochondrial (547 aa).

This sequence belongs to the iron-containing alcohol dehydrogenase family. Hydroxyacid-oxoacid transhydrogenase subfamily.

Its subcellular location is the mitochondrion. The enzyme catalyses (S)-3-hydroxybutanoate + 2-oxoglutarate = (R)-2-hydroxyglutarate + acetoacetate. It catalyses the reaction 4-hydroxybutanoate + 2-oxoglutarate = (R)-2-hydroxyglutarate + succinate semialdehyde. In terms of biological role, catalyzes the cofactor-independent reversible oxidation of gamma-hydroxybutyrate (GHB) to succinic semialdehyde (SSA) coupled to reduction of 2-ketoglutarate (2-KG) to D-2-hydroxyglutarate (D-2-HG). L-3-hydroxybutyrate (L-3-OHB) is also a substrate for HOT when using 2-KG as hydrogen acceptor, resulting in the formation of D-2-HG. The polypeptide is Probable hydroxyacid-oxoacid transhydrogenase, mitochondrial (adhfe1) (Dictyostelium discoideum (Social amoeba)).